The following is a 300-amino-acid chain: MEQANPLRPDGESKGGVLAHLERLETQVSRSRKQSEELQSVQAQEGALGTKIHKLRRLRDELRAVVRHRRASVKACIANVEPNQTVEINEQEALEEKLENVKAILQAYHFTGLSGKLTSRGVCVCISTAFEGNLLDSYFVDLVIQKPLRIHHHSVPVFIPLEEIAAKYLQTNIQHFLFSLCEYLNAYSGRKYQADRLQSDFAALLTGPLQRNPLCNLLSFTYKLDPGGQSFPFCARLLYKDLTATLPTDVTVTCQGVEVLSTSWEEQRASHETLFCTKPLHQVFASFTRKGEKLDMSLVS.

Coiled-coil stretches lie at residues 18–42 and 83–109; these read LAHL…QSVQ and NQTV…QAYH. Phosphoserine is present on Ser-35.

This sequence belongs to the CENP-O/MCM21 family. As to quaternary structure, component of the CENPA-CAD complex, composed of CENPI, CENPK, CENPL, CENPO, CENPP, CENPQ, CENPR and CENPS. The CENPA-CAD complex interacts with the CENPA-NAC complex, at least composed of CENPA, CENPC, CENPH, CENPM, CENPN, CENPT and CENPU.

The protein resides in the nucleus. It is found in the chromosome. The protein localises to the centromere. It localises to the kinetochore. Its function is as follows. Component of the CENPA-CAD (nucleosome distal) complex, a complex recruited to centromeres which is involved in assembly of kinetochore proteins, mitotic progression and chromosome segregation. May be involved in incorporation of newly synthesized CENPA into centromeres via its interaction with the CENPA-NAC complex. Modulates the kinetochore-bound levels of NDC80 complex. The chain is Centromere protein O (CENPO) from Homo sapiens (Human).